The sequence spans 522 residues: Putative aminopeptidase W07G4.4 (522 aa).

Residues Lys-271 and Asp-276 each contribute to the Zn(2+) site. The active site involves Lys-283. Asp-294, Asp-354, and Glu-356 together coordinate Zn(2+). Arg-358 is an active-site residue.

It belongs to the peptidase M17 family. It depends on Zn(2+) as a cofactor.

The chain is Putative aminopeptidase W07G4.4 (lap-2) from Caenorhabditis elegans.